We begin with the raw amino-acid sequence, 410 residues long: MGAVSCRQGQHTQQGEHTRVAVPHKQGGNIRGPWARGWKSLWTGLGTIRSDLEELWELRGHHYLHQESLKPAPVLVEKPLPEWPVPQFINLFLPEFPIRPIRGQQQLKILGLVAKGSFGTVLKVLDCTQKAVFAVKVVPKVKVLQRDTVRQCKEEVSIQRQINHPFVHSLGDSWQGKRHLFIMCSYCSTDLYSLWSAVGCFPEASIRLFAAELVLVLCYLHDLGIMHRDVKMENILLDERGHLKLTDFGLSRHVPQGAQAYTICGTLQYMAPEVLSGGPYNHAADWWSLGVLLFSLATGKFPVAAERDHVAMLASVTHSDSEIPASLNQGLSLLLHELLCQNPLHRLRYLHHFQVHPFFRGVAFDPELLQKQPVNFVTETQATQPSSAETMPFDDFDCDLESFLLYPIPA.

The Protein kinase domain occupies 107–274 (LKILGLVAKG…GTLQYMAPEV (168 aa)). Residues 113–121 (VAKGSFGTV) and Lys-136 contribute to the ATP site. Asp-229 acts as the Proton acceptor in catalysis.

This sequence belongs to the protein kinase superfamily. Ser/Thr protein kinase family.

It catalyses the reaction L-seryl-[protein] + ATP = O-phospho-L-seryl-[protein] + ADP + H(+). The catalysed reaction is L-threonyl-[protein] + ATP = O-phospho-L-threonyl-[protein] + ADP + H(+). This chain is Ribosomal protein S6 kinase-related protein, found in Homo sapiens (Human).